The sequence spans 379 residues: Multicilin (379 aa).

Disordered stretches follow at residues 26–46 and 87–106; these read SRRS…PWKS and LLGT…NPSL. Positions 175-223 form a coiled coil; that stretch reads EQYWKEVADQNQRALGTALIENNQLHVTLTQKQEEIASLRERNVQLKEL. Basic and acidic residues predominate over residues 289-309; that stretch reads LQNRDPKRPRLQQEPDSKDCS. The disordered stretch occupies residues 289 to 311; it reads LQNRDPKRPRLQQEPDSKDCSTR.

It belongs to the geminin family. Heterodimer (via coiled-coil domain) with GMNN (via coiled-coil domain); targets GMNN to the nucleus. Can form homodimers (in vitro, via coiled-coil domain), but these are much less stable than the heterodimer formed with GMNN.

Its subcellular location is the nucleus. Transcription regulator specifically required for multiciliate cell differentiation. Acts in a multiprotein complex containing E2F4 and E2F5 that binds and activates genes required for centriole biogenesis. Required for the deuterosome-mediated acentriolar pathway. Plays a role in mitotic cell cycle progression by promoting cell cycle exit. Modulates GMNN activity by reducing its affinity for CDT1. The polypeptide is Multicilin (Mcidas) (Rattus norvegicus (Rat)).